Here is a 270-residue protein sequence, read N- to C-terminus: uncharacterized protein (270 aa).

To T.pallidum TP_0127, TP_0315 and TP_0618.

This is an uncharacterized protein from Treponema pallidum (strain Nichols).